The sequence spans 207 residues: Large ribosomal subunit protein uL4 (207 aa).

Positions 43 to 85 (SRRQGTHDTKGRSEVRGGGRKPWKQKGTGRARQGSIRSPQWVG) are disordered. Over residues 47–59 (GTHDTKGRSEVRG) the composition is skewed to basic and acidic residues. Residues 60 to 71 (GGRKPWKQKGTG) show a composition bias toward basic residues.

It belongs to the universal ribosomal protein uL4 family. As to quaternary structure, part of the 50S ribosomal subunit.

In terms of biological role, one of the primary rRNA binding proteins, this protein initially binds near the 5'-end of the 23S rRNA. It is important during the early stages of 50S assembly. It makes multiple contacts with different domains of the 23S rRNA in the assembled 50S subunit and ribosome. Forms part of the polypeptide exit tunnel. In Exiguobacterium sibiricum (strain DSM 17290 / CCUG 55495 / CIP 109462 / JCM 13490 / 255-15), this protein is Large ribosomal subunit protein uL4.